Reading from the N-terminus, the 425-residue chain is MTNVMDVLRERGFIDAVTSEEIRQLTNQPIKVYCGFDPTADSLHLGNLVAIMGLAWFQRFGHTPVAIVGGATGMIGDPSGKNAERQLLDEKKIQLNLKGISKNLEAILDFNHPTAPAIILNNLDWFKNFTFISFLRDVGKLFRLSPMLAKDSVKTRLNSEEGMSFTEFCYQILQGYDFLHLFENYGVTVELGGSDQWGNITAGTDLIRKVHAKPAYGITFPLLTKSDGQKFGKSEKGAVWLSPDKLSSYEFYQHLIRVEDADVINLMRMLTFLDMGEIRHYEQMMKEADYVPRTAQKRLAEEITRLVHGEEGLKIAIKVTEGVAPGSQTSLNADILEKLAADMPSCEMKLENVLNKKLIDLLVETKLQTSKSEARRLLRNGGVYINNKKIEDENHIISVECLISSRLILLAAGKKNKMIIRLMEE.

An L-tyrosine-binding site is contributed by tyrosine 33. The 'HIGH' region signature appears at 38-47 (PTADSLHLGN). L-tyrosine contacts are provided by tyrosine 170 and glutamine 174. Positions 230–234 (KFGKS) match the 'KMSKS' region motif. Lysine 233 contributes to the ATP binding site. In terms of domain architecture, S4 RNA-binding spans 356 to 422 (KKLIDLLVET…GKKNKMIIRL (67 aa)).

This sequence belongs to the class-I aminoacyl-tRNA synthetase family. TyrS type 1 subfamily. Homodimer.

The protein resides in the cytoplasm. It carries out the reaction tRNA(Tyr) + L-tyrosine + ATP = L-tyrosyl-tRNA(Tyr) + AMP + diphosphate + H(+). In terms of biological role, catalyzes the attachment of tyrosine to tRNA(Tyr) in a two-step reaction: tyrosine is first activated by ATP to form Tyr-AMP and then transferred to the acceptor end of tRNA(Tyr). This Protochlamydia amoebophila (strain UWE25) protein is Tyrosine--tRNA ligase.